The sequence spans 79 residues: uncharacterized protein (79 aa).

This is an uncharacterized protein from Escherichia coli O6:H1 (strain CFT073 / ATCC 700928 / UPEC).